Consider the following 345-residue polypeptide: Mariner Mos1 transposase (345 aa).

A DNA-binding region spans residues 1 to 112 (MSSFVPNKEQ…VSNRLREMGK (112 aa)). DNA-binding regions (H-T-H motif) lie at residues 24–55 (TAAE…RFKS) and 89–110 (QKQL…LREM). The tract at residues 113-125 (IQKVGRWVPHELN) is linker. Residues 126–345 (ERQMERRKNT…CVASDGKYLE (220 aa)) are catalytic. Mg(2+) is bound by residues Asp156, Asp249, and Asp284.

As to quaternary structure, homodimer. The complex has a trans arrangement, with each transposon end recognized by the DNA binding region of one transposase monomer and by the active site of the other monomer. Mg(2+) is required as a cofactor. Requires Mn(2+) as cofactor.

The protein localises to the nucleus. Mediates transposition of transposon Mos1 by a 'cut and paste' mechanism. Transposases are sequence-specific nucleases and strand transferases that catalyze transposition through an ordered series of events: sequence-specific binding of transposase to the terminal inverted repeats (IR) present at each end of the transposon, pairing of the transposon IRs in a paired-end complex (PEC), cleavage of one or both DNA strands at each transposon end, capture of target DNA, and strand transfer to insert the transposon at a new site. The chain is Mariner Mos1 transposase (mariner\T) from Drosophila mauritiana (Fruit fly).